The primary structure comprises 620 residues: LysM domain receptor-like kinase 3 (620 aa).

A signal peptide spans 1–23 (MNLKNGLLLFILFLDCVFFKVES). Residues 24–231 (KCVKGCDVAL…YSRTGIAKGS (208 aa)) lie on the Extracellular side of the membrane. 3 disulfides stabilise this stretch: Cys25–Cys92, Cys29–Cys154, and Cys90–Cys152. A glycan (N-linked (GlcNAc...) asparagine) is linked at Asn46. One can recognise a LysM 1; degenerate domain in the interval 46 to 72 (NISNFMQSKIVLTNSFDVIMSYNRDVV). LysM domains lie at 102 to 148 (FEYT…KINV) and 167 to 210 (VTYP…VFIP). Chitin contacts are provided by residues 108–114 (EGDDYDL) and 136–142 (DPNHIPV). 2 N-linked (GlcNAc...) asparagine glycosylation sites follow: Asn147 and Asn199. The helical transmembrane segment at 232–252 (AVGIAMAGIFGLLLFVIYIYA) threads the bilayer. Residues 253–620 (KYFQKKEEEK…QSLINLLSTR (368 aa)) are Cytoplasmic-facing. Over residues 265–278 (LPQTSRAFSTQDAS) the composition is skewed to polar residues. The tract at residues 265–292 (LPQTSRAFSTQDASGSAEYETSGSSGHA) is disordered. Phosphoserine occurs at positions 269 and 273. In terms of domain architecture, Protein kinase spans 322 to 595 (FSLDNKIGQG…RSIVVALMTL (274 aa)). ATP-binding positions include 328–336 (IGQGGFGAV) and Lys349. Residue Asp441 is the Proton acceptor of the active site.

The protein belongs to the protein kinase superfamily. Ser/Thr protein kinase family. In terms of assembly, forms homodimers and homooligomers. Forms heteromeric complexes with NFP at the cell periphery in nodules. Interacts with PUB1. In terms of processing, autophosphorylated. In terms of tissue distribution, expressed in the epidermal and root hair cells of the developing root hair zone during nonsymbiotic growth. Accumulates in roots and nodules during symbiotic growth with rhizobia. Localized at the cell periphery in a narrow zone of about two cell layers (e.g. L1/L2 zone) at the nodule apex upon infection by rhizobia, from the meristem to the infection zone (at protein level).

Its subcellular location is the cell membrane. The protein resides in the vacuole lumen. The enzyme catalyses L-seryl-[protein] + ATP = O-phospho-L-seryl-[protein] + ADP + H(+). The catalysed reaction is L-threonyl-[protein] + ATP = O-phospho-L-threonyl-[protein] + ADP + H(+). In terms of biological role, putative receptor for S.meliloti Nod factor signals essential for the establishment of the nitrogen-fixing, root nodule symbiosis with S.meliloti. Involved in the control of root hair curling after S.meliloti infection, probably by modulating the reorganization of the microtubular cytoskeleton in epidermal and cortical cells. Regulates a subset of Nod factor-induced genes. In Medicago truncatula (Barrel medic), this protein is LysM domain receptor-like kinase 3.